We begin with the raw amino-acid sequence, 1460 residues long: DNA-binding protein RFX7 (1460 aa).

The tract at residues M1–V34 is disordered. A DNA-binding region (RFX-type winged-helix) is located at residues A108 to A183. Positions P188 to L193 match the PxLPxI/L motif; mediates interaction with ANKRA2 and RFXANK motif. Residues Q308–L352 form a disordered region. Residue S322 is modified to Phosphoserine. The span at T337–L352 shows a compositional bias: polar residues. S379 is modified (phosphoserine). Residues S404–P416 are compositionally biased toward polar residues. The interval S404–R428 is disordered. Phosphoserine occurs at positions 418 and 455. Polar residues predominate over residues T481–N513. Disordered regions lie at residues T481–E585, T632–P715, and Q917–P1015. Residues S515–V535 show a composition bias toward low complexity. Basic and acidic residues predominate over residues V537–P549. Composition is skewed to polar residues over residues Q563 to S583 and T632 to S644. Position 564 is a phosphothreonine (T564). Position 662 is a phosphoserine (S662). K704 is modified (N6-acetyllysine). 2 stretches are compositionally biased toward polar residues: residues T705–P715 and Q917–H933. A compositionally biased stretch (pro residues) spans T947–T963. A compositionally biased stretch (polar residues) spans G971–C1009. The residue at position 988 (T988) is a Phosphothreonine. A phosphoserine mark is found at S1178 and S1329.

This sequence belongs to the RFX family. In terms of assembly, interacts (via PxLPxI/L motif) with RFXANK (via ankyrin repeats). Interacts (via PxLPxI/L motif) with ANKRA2 (via ankyrin repeats). Widely expressed in many different tissue types including thymus and placenta, with high expression in brain. Expressed in both inhibitory and excitatory neurons in cortex.

The protein resides in the nucleus. Transcription factor. Acts as a transcriptional activator by binding to promoter regions of target genes, such as PDCD4, PIK3IP1, MXD4, PNRC1, and RFX5. Plays a role in natural killer (NK) cell maintenance and immunity. May play a role in the process of ciliogenesis in the neural tube and neural tube closure. This Homo sapiens (Human) protein is DNA-binding protein RFX7.